Reading from the N-terminus, the 655-residue chain is uncharacterized protein (655 aa).

A signal peptide spans 1-23 (MKRTIKYLSFLGLIPFLSITTIS). Cys24 is lipidated: N-palmitoyl cysteine. Cys24 is lipidated: S-diacylglycerol cysteine.

This sequence belongs to the MG067/MG068/MG395 family.

It is found in the cell membrane. This is an uncharacterized protein from Mycoplasma capricolum subsp. capricolum (strain California kid / ATCC 27343 / NCTC 10154).